The sequence spans 92 residues: MAFVKRDNKNKKRFQQQNPLFKRKRFCRFTVAGVEQIDYKDLDTLKDFIGDNGKITPARLTGTKAHYQRQLDTAIKRARFLALMPYTDLHKN.

This sequence belongs to the bacterial ribosomal protein bS18 family. In terms of assembly, part of the 30S ribosomal subunit. Forms a tight heterodimer with protein bS6.

Binds as a heterodimer with protein bS6 to the central domain of the 16S rRNA, where it helps stabilize the platform of the 30S subunit. The sequence is that of Small ribosomal subunit protein bS18 from Cupriavidus necator (strain ATCC 17699 / DSM 428 / KCTC 22496 / NCIMB 10442 / H16 / Stanier 337) (Ralstonia eutropha).